We begin with the raw amino-acid sequence, 117 residues long: G antigen 1 (117 aa).

The segment at 1–117 is disordered; it reads MSWRGRSTYY…PEEGEGQSQC (117 aa). Composition is skewed to acidic residues over residues 32 to 45 and 87 to 96; these read FSDEVEPATPEEGE and ECEDGPDGQE.

It belongs to the GAGE family. In terms of tissue distribution, expressed in a variety of tumor tissues but not in normal tissues, except testis.

In terms of biological role, antigen, recognized on melanoma by autologous cytolytic T-lymphocytes. This Homo sapiens (Human) protein is G antigen 1.